The chain runs to 368 residues: Glutamate 5-kinase (368 aa).

Residue K9 participates in ATP binding. The substrate site is built by S49, D136, and N148. ATP-binding positions include 168–169 (TD) and 210–216 (TGGMMTK). The 79-residue stretch at 275-353 (AGIITIDDGA…ADIENVLGYE (79 aa)) folds into the PUA domain.

Belongs to the glutamate 5-kinase family.

It localises to the cytoplasm. The enzyme catalyses L-glutamate + ATP = L-glutamyl 5-phosphate + ADP. It participates in amino-acid biosynthesis; L-proline biosynthesis; L-glutamate 5-semialdehyde from L-glutamate: step 1/2. Functionally, catalyzes the transfer of a phosphate group to glutamate to form L-glutamate 5-phosphate. The polypeptide is Glutamate 5-kinase (Haemophilus influenzae (strain 86-028NP)).